A 265-amino-acid polypeptide reads, in one-letter code: MAREKIQIKKIDNSTARQVTFSKRRRGLFKKAEELSVLCDADVALIIFSSTGKLFDYSSSSMKQILERRDLHSKNLEKLDQPSLELQLVENSNYSRLSKEISEKSHRLRQMRGEELQGLNIEELQQLERSLETGLSRVIERKGDKIMREINQLQQKGMHLMEENEKLRQQVMEISNNNNNNNNGYREAGVVIFEPENGFNNNNNEDGQSSESVTNPCNSIDPPPQDDDSSDTSLKLGLATLLRLKRSKARCGYFCMLLEEGEKKK.

The MADS-box domain occupies 3 to 57 (REKIQIKKIDNSTARQVTFSKRRRGLFKKAEELSVLCDADVALIIFSSTGKLFDY). Residues 87 to 177 (QLVENSNYSR…RQQVMEISNN (91 aa)) form the K-box domain. Residues 196–232 (ENGFNNNNNEDGQSSESVTNPCNSIDPPPQDDDSSDT) are disordered. The span at 205 to 218 (EDGQSSESVTNPCN) shows a compositional bias: polar residues.

In terms of tissue distribution, widely expressed with highest levels in shoot tips and axillary buds. Also found in fully developed pedicels and flowers.

The protein resides in the nucleus. Putative transcription factor that coordinates gene expression underlying the differentiation of the pedicel abscission zone. May also be involved in the maintenance of the inflorescence meristem state. The protein is MADS-box protein JOINTLESS (J) of Solanum lycopersicum (Tomato).